A 266-amino-acid polypeptide reads, in one-letter code: MKIGRFVIEGNAAIMGILNVTPDSFSDGGSYTTVQKALDHVEQMIADGAKIIDVGGESTRPGCQFVSATDEIDRVVPVIKAIKENYDILISIDTYKTETARAALEAGADILNDVWAGLYDGQMFALAAEYDAPIILMHNQDEEVYQEVTQDVCDFLGNRAQAALDAGVPKNNIWIDPGFGFAKSVQQNTELLKGLDRVCQLGYPVLFGISRKRVVDALLGGNTKAKERDGATAALSAYALGKGCQIVRVHDVKANQDIVAVLSQLM.

The 249-residue stretch at 12 to 260 (AAIMGILNVT…DVKANQDIVA (249 aa)) folds into the Pterin-binding domain. Residue N19 coordinates Mg(2+). Residues T59, D93, N112, D176, K212, and 248 to 250 (RVH) each bind (7,8-dihydropterin-6-yl)methyl diphosphate.

It belongs to the DHPS family. As to quaternary structure, homodimer or homotrimer. Mg(2+) serves as cofactor.

The enzyme catalyses (7,8-dihydropterin-6-yl)methyl diphosphate + 4-aminobenzoate = 7,8-dihydropteroate + diphosphate. Its pathway is cofactor biosynthesis; tetrahydrofolate biosynthesis; 7,8-dihydrofolate from 2-amino-4-hydroxy-6-hydroxymethyl-7,8-dihydropteridine diphosphate and 4-aminobenzoate: step 1/2. Functionally, catalyzes the condensation of para-aminobenzoate (pABA) with 6-hydroxymethyl-7,8-dihydropterin diphosphate (DHPt-PP) to form 7,8-dihydropteroate (H2Pte), the immediate precursor of folate derivatives. This Streptococcus pyogenes serotype M18 (strain MGAS8232) protein is Dihydropteroate synthase (folP).